We begin with the raw amino-acid sequence, 533 residues long: Probable RNA-binding protein 46 (533 aa).

RRM domains are found at residues Cys-61–Asp-139, Cys-141–Pro-223, and Lys-236–Pro-308.

In terms of assembly, interacts with YTHDC2, MEIOC, MOV10, CNOT6L, DDX4, UPF1 and PABPC1.

The protein resides in the cytoplasm. Functionally, essential for male and female fertility, playing a crucial role in regulating germ cell development by ensuring the proper progression of meiosis prophase I. Regulates mitotic-to-meiotic transition in spermatogenesis by forming a complex with MEIOC and YTHDC2 which recognizes and down-regulates mitotic transcripts for a successful meiotic entry. Required for normal synaptonemal complex formation during meiosis, binding meiotic cohesin subunit mRNAs containing GCCUAU/GUUCGA motifs in their 3'UTRs regions and positively regulating their translation. Required for spermatogonial differentiation in both developing and adult testis. This Homo sapiens (Human) protein is Probable RNA-binding protein 46 (RBM46).